The primary structure comprises 324 residues: tRNA pseudouridine synthase B (324 aa).

Asp49 acts as the Nucleophile in catalysis. The tract at residues 87 to 107 is disordered; that stretch reads RSTDDLEGQPTKTSDKRPSRE.

This sequence belongs to the pseudouridine synthase TruB family. Type 1 subfamily.

The enzyme catalyses uridine(55) in tRNA = pseudouridine(55) in tRNA. Its function is as follows. Responsible for synthesis of pseudouridine from uracil-55 in the psi GC loop of transfer RNAs. The protein is tRNA pseudouridine synthase B of Brucella canis (strain ATCC 23365 / NCTC 10854 / RM-666).